The chain runs to 619 residues: MLWQALRRFGQKLVRRRLLELGMGETRLARCLSTLDLVALGVGSTLGAGVYVLAGEVAKEKAGPSIVICFLVAALSSVLAGLCYAEFGARVPGSGSAYLYSYVTVGELWAFTTGWNLILSYVIGTASVARAWSSAFDNLIGNHISQTLKGTILLNMPHVLAEYPDFFALALVLLLTGLLVLGANESGLVTKVFTGMNLLVLGFVIISGFIKGELRNWKLTKEDYCLTMSESNGTCSLDSMGSGGFMPFGLEGILRGAATCFYAFVGFDCIATTGEEAQNPQRSIPMGIVISLSICFLAYFGVSSALTLMMPYYKLQPESPLPEAFTYVGWEPARYLVAIGSLCALSTSLLGSMFPMPRVIYAMAEDGLLFRVLARVHNGTHTPIVATVVSGVIAAFMAFLFELTDLVDLMSIGTLLAYSLVSICVLILRYQPDQEMKNGEEEVELQEERTLEAEKLTVQALFCQVDSIPTLLSGRIVYVCSSLLAVLLTVLCLVLTWWTTPLHSGDPVWVTVVVLILGLILGISGVIWRQPQNRTPLHFKVPVVPLLPLVSIFVNVYLMMQMTADTWARFGVWMLIGFAIYFGYGIQHSVEEVKNHQTLPKTRPQTIDLDLTTSCVHSI.

At 1 to 36 the chain is on the cytoplasmic side; sequence MLWQALRRFGQKLVRRRLLELGMGETRLARCLSTLD. A helical membrane pass occupies residues 37–57; it reads LVALGVGSTLGAGVYVLAGEV. Topologically, residues 58-61 are extracellular; the sequence is AKEK. A helical transmembrane segment spans residues 62–82; that stretch reads AGPSIVICFLVAALSSVLAGL. At 83-107 the chain is on the cytoplasmic side; it reads CYAEFGARVPGSGSAYLYSYVTVGE. Residues 108–128 form a helical membrane-spanning segment; that stretch reads LWAFTTGWNLILSYVIGTASV. Over 129-162 the chain is Extracellular; sequence ARAWSSAFDNLIGNHISQTLKGTILLNMPHVLAE. A helical transmembrane segment spans residues 163 to 183; it reads YPDFFALALVLLLTGLLVLGA. Over 184 to 191 the chain is Cytoplasmic; sequence NESGLVTK. The chain crosses the membrane as a helical span at residues 192–212; that stretch reads VFTGMNLLVLGFVIISGFIKG. Over 213–244 the chain is Extracellular; the sequence is ELRNWKLTKEDYCLTMSESNGTCSLDSMGSGG. N-linked (GlcNAc...) asparagine glycosylation is present at N232. A helical membrane pass occupies residues 245-265; sequence FMPFGLEGILRGAATCFYAFV. At 266 to 285 the chain is on the cytoplasmic side; it reads GFDCIATTGEEAQNPQRSIP. The helical transmembrane segment at 286–306 threads the bilayer; sequence MGIVISLSICFLAYFGVSSAL. Residues 307–335 lie on the Extracellular side of the membrane; sequence TLMMPYYKLQPESPLPEAFTYVGWEPARY. A helical transmembrane segment spans residues 336-356; the sequence is LVAIGSLCALSTSLLGSMFPM. The Cytoplasmic segment spans residues 357 to 382; that stretch reads PRVIYAMAEDGLLFRVLARVHNGTHT. A helical membrane pass occupies residues 383-403; that stretch reads PIVATVVSGVIAAFMAFLFEL. Topologically, residues 404–406 are extracellular; it reads TDL. The helical transmembrane segment at 407–427 threads the bilayer; it reads VDLMSIGTLLAYSLVSICVLI. Topologically, residues 428-475 are cytoplasmic; it reads LRYQPDQEMKNGEEEVELQEERTLEAEKLTVQALFCQVDSIPTLLSGR. A helical transmembrane segment spans residues 476–496; sequence IVYVCSSLLAVLLTVLCLVLT. The Extracellular segment spans residues 497 to 507; sequence WWTTPLHSGDP. The helical transmembrane segment at 508–528 threads the bilayer; sequence VWVTVVVLILGLILGISGVIW. Topologically, residues 529 to 540 are cytoplasmic; sequence RQPQNRTPLHFK. The chain crosses the membrane as a helical span at residues 541–561; it reads VPVVPLLPLVSIFVNVYLMMQ. Topologically, residues 562 to 569 are extracellular; sequence MTADTWAR. A helical transmembrane segment spans residues 570–590; that stretch reads FGVWMLIGFAIYFGYGIQHSV. The Cytoplasmic segment spans residues 591-619; it reads EEVKNHQTLPKTRPQTIDLDLTTSCVHSI. T606 bears the Phosphothreonine mark. S618 carries the post-translational modification Phosphoserine.

It belongs to the amino acid-polyamine-organocation (APC) superfamily. Cationic amino acid transporter (CAT) (TC 2.A.3.3) family. Post-translationally, N-glycosylated. As to expression, highly expressed in brain.

The protein resides in the cell membrane. It carries out the reaction L-arginine(in) = L-arginine(out). The catalysed reaction is L-lysine(in) = L-lysine(out). It catalyses the reaction L-ornithine(in) = L-ornithine(out). With respect to regulation, inhibited by high potassium ions-induced membrane depolarization. Functionally, uniporter that mediates the uptake of cationic L-amino acids such as L-arginine, L-lysine and L-ornithine. The transport is sodium ions- and pH-independent, moderately trans-stimulated and is mediated by passive diffusion. The chain is Cationic amino acid transporter 3 from Rattus norvegicus (Rat).